Here is a 491-residue protein sequence, read N- to C-terminus: Probable ribonuclease FAU-1 (491 aa).

It belongs to the FAU-1 family.

Its function is as follows. Probable RNase involved in rRNA stability through maturation and/or degradation of precursor rRNAs. Binds to RNA in loop regions with AU-rich sequences. This chain is Probable ribonuclease FAU-1, found in Thermofilum pendens (strain DSM 2475 / Hrk 5).